A 110-amino-acid chain; its full sequence is uncharacterized protein (110 aa).

Residues 86-110 (SEEIDEPVMKKRHRRKGSPHRAPFF) are disordered. Residues 95-104 (KKRHRRKGSP) show a composition bias toward basic residues.

This is an uncharacterized protein from Arabidopsis thaliana (Mouse-ear cress).